Here is a 694-residue protein sequence, read N- to C-terminus: N,N-dimethylglycine/sarcosine dehydrogenase (694 aa).

The protein in the N-terminal section; belongs to the NADH:flavin oxidoreductase/NADH oxidase family. Monomer. The purified enzyme exists in the form of a monomer, dimer or polymer under non-denaturing conditions, but only the monomeric protein exhibits enzyme activity. Requires FAD as cofactor. It depends on NAD(+) as a cofactor. NADP(+) is required as a cofactor.

The protein resides in the cytoplasm. It catalyses the reaction oxidized 2[4Fe-4S]-[ferredoxin] + N,N-dimethylglycine + H2O = reduced 2[4Fe-4S]-[ferredoxin] + sarcosine + formaldehyde + 2 H(+). It carries out the reaction oxidized 2[4Fe-4S]-[ferredoxin] + sarcosine + H2O = reduced 2[4Fe-4S]-[ferredoxin] + formaldehyde + glycine + 2 H(+). Ca(2+) increases the activity by 12%, while the other metal ions tested have no or slightly inhibitory effects. The chelating agent EDTA inhibits the activity by 33%. Its function is as follows. Involved in degradation of glycine betaine. Catalyzes the demethylation of both N,N-dimethylglycine (DMG) and sarcosine, releasing formaldehyde and forming glycine as the final product. Does not show activity toward trimethylamine (TMA), histamine, glycine betaine (GB) or choline. The C-N bond in DMG is probably oxidized by removal of a hydride equivalent to form a labile imine intermediate, which is then spontaneously hydrolyzed in the presence of water, producing sarcosine and formaldehyde. The two protons subtracted from DMG are transferred to the non-covalently bound FAD, resulting in the reduced form of FAD, which is subsequently reoxidized by coupling with reduction of the enzyme-bound NAD(P)(+). Regeneration of NAD(P)(+) is achieved by electron transfer to the [4Fe-4S] cluster in the probable membrane-anchored ferredoxin csal_0991. The protein is N,N-dimethylglycine/sarcosine dehydrogenase of Chromohalobacter salexigens (strain ATCC BAA-138 / DSM 3043 / CIP 106854 / NCIMB 13768 / 1H11).